We begin with the raw amino-acid sequence, 350 residues long: m7GpppX diphosphatase (350 aa).

The residue at position 2 (Ser2) is an N-acetylserine. Ser60 is subject to Phosphoserine. At Thr66 the chain carries Phosphothreonine. Phosphothreonine; by YAK1 is present on Thr66. Phosphotyrosine is present on Tyr70. Residue Thr120 is modified to Phosphothreonine. Substrate-binding positions include Glu171, Lys196, and His259–His270. Residues His266–His270 carry the Histidine triad motif motif. The active-site Nucleophile is His268.

It belongs to the HIT family. Homodimer. Forms heterodimer with DCS2; the interaction inhibits the DCS1 scavenger decapping activity during post-diauxic growth. Post-translationally, phosphorylated. Phosphorylation occurs upon glucose deprivation.

It is found in the cytoplasm. Its subcellular location is the perinuclear region. It localises to the P-body. It carries out the reaction a 5'-end (N(7)-methyl 5'-triphosphoguanosine)-ribonucleoside in mRNA + H2O = N(7)-methyl-GMP + a 5'-end diphospho-ribonucleoside in mRNA + 2 H(+). The hydrolytic product 7-methylguanosine diphosphate (m7GDP) efficiently inhibits the decapping scavenger activity and acts as a competitive inhibitor in vitro. Functionally, decapping scavenger enzyme that catalyzes the cleavage of a residual cap structure following the degradation of mRNAs by the 3'-&gt;5' exosome-mediated mRNA decay pathway. Hydrolyzes cap analog structures like 7-methylguanosine nucleoside triphosphate (m7GpppG) and tri-methyl guanosine nucleoside triphosphate (m3(2,2,7)GpppG) with up to 10 nucleotide substrates (small capped oligoribonucleotides) and specifically releases 5'-phosphorylated RNA fragments and 7-methylguanosine monophosphate (m7GMP) or tri-methyl guanosine nucleoside monophosphate (m3(2,2,7)GMP), respectively. Does not hydrolyze unmethylated cap analog (GpppG) and shows no decapping activity on intact m7GpppG-capped mRNA molecules longer than 25 nucleotides. Does not hydrolyze 7-methylguanosine diphosphate (m7GDP) and tri-methylguanosine diphosphate (m3(2,2,7)GDP) to (m(7)GMP) and m3(2,2,7)GMP, respectively. May also play a role in the 5'-&gt;3 mRNA decay pathway; m7GDP, the downstream product released by the 5'-&gt;3' mRNA mediated decapping activity, may be also converted by DCS1 to m7GMP. Binds to m7GpppG and strongly to m7GDP. May also regulate the 5'-&gt;3' exoribonucleolytic mRNA decay pathway in a cap-independent manner. Negatively regulates trehalase activity. This Saccharomyces cerevisiae (strain ATCC 204508 / S288c) (Baker's yeast) protein is m7GpppX diphosphatase.